Here is a 203-residue protein sequence, read N- to C-terminus: bMERB domain-containing protein 1 (203 aa).

Residues 3–149 (LKQSLSVHLE…EQEEDKEMAD (147 aa)) enclose the bMERB domain. The tract at residues 160-186 (KVTKSSASSRAEKKAEPPPSKPTVAKT) is disordered.

In Rattus norvegicus (Rat), this protein is bMERB domain-containing protein 1 (Bmerb1).